The chain runs to 83 residues: UPF0457 protein YnzG (83 aa).

Belongs to the UPF0457 family.

This Bacillus subtilis (strain 168) protein is UPF0457 protein YnzG (ynzG).